A 130-amino-acid chain; its full sequence is Small ribosomal subunit protein uS9 (130 aa).

The protein belongs to the universal ribosomal protein uS9 family.

In Azotobacter vinelandii (strain DJ / ATCC BAA-1303), this protein is Small ribosomal subunit protein uS9.